A 253-amino-acid chain; its full sequence is Sulfate transporter CysZ (253 aa).

A run of 4 helical transmembrane segments spans residues 27–47 (FVLL…YLAV), 71–91 (ILWP…FTVV), 150–170 (LFIL…WLLF), and 211–231 (IVYV…AAVA).

This sequence belongs to the CysZ family.

It is found in the cell inner membrane. High affinity, high specificity proton-dependent sulfate transporter, which mediates sulfate uptake. Provides the sulfur source for the cysteine synthesis pathway. This is Sulfate transporter CysZ from Pseudomonas syringae pv. tomato (strain ATCC BAA-871 / DC3000).